Reading from the N-terminus, the 386-residue chain is Enoyl-[acyl-carrier-protein] reductase 2, mitochondrial (386 aa).

Residues 1–22 (MYSVLKQSIRPRLLATHNQFRT) constitute a mitochondrion transit peptide. Residue Y79 is the Proton donor of the active site. NADP(+) contacts are provided by residues N172, 199–202 (TSAV), 222–224 (RDR), 296–299 (YGGM), 321–323 (FWV), and K381.

The protein belongs to the zinc-containing alcohol dehydrogenase family. Quinone oxidoreductase subfamily. As to quaternary structure, homodimer and heterodimer with ETR1.

It is found in the mitochondrion. It carries out the reaction a 2,3-saturated acyl-[ACP] + NADP(+) = a (2E)-enoyl-[ACP] + NADPH + H(+). Required for respiration and the maintenance of the mitochondrial compartment. Oxidoreductase with a preference for short and medium chain substrates, including trans-2-hexenoyl-CoA (C6), trans-2-decenoyl-CoA (C10), and trans-2-hexadecenoyl-CoA (C16). May play a role in mitochondrial fatty acid synthesis. This is Enoyl-[acyl-carrier-protein] reductase 2, mitochondrial (ETR2) from Candida tropicalis (Yeast).